We begin with the raw amino-acid sequence, 615 residues long: UvrABC system protein C (615 aa).

A GIY-YIG domain is found at 14 to 91; it reads TSPGCYIHKD…IKENKPKYNI (78 aa). The region spanning 196-231 is the UVR domain; sequence NKIIDELKGKMAAAAQTMEFERAAEYRDLIQAIGTL.

It belongs to the UvrC family. In terms of assembly, interacts with UvrB in an incision complex.

It localises to the cytoplasm. Functionally, the UvrABC repair system catalyzes the recognition and processing of DNA lesions. UvrC both incises the 5' and 3' sides of the lesion. The N-terminal half is responsible for the 3' incision and the C-terminal half is responsible for the 5' incision. The chain is UvrABC system protein C from Streptococcus pneumoniae (strain JJA).